A 49-amino-acid polypeptide reads, in one-letter code: Large ribosomal subunit protein bL33 (49 aa).

The protein belongs to the bacterial ribosomal protein bL33 family.

This chain is Large ribosomal subunit protein bL33, found in Moorella thermoacetica (strain ATCC 39073 / JCM 9320).